The primary structure comprises 493 residues: Alpha-amylase-related protein (493 aa).

The signal sequence occupies residues 1-19; it reads MFKLAFTLTLCLAGSLSLA. Residue Gln-20 is modified to Pyrrolidone carboxylic acid. Residues Cys-47 and Cys-103 are joined by a disulfide bond. Ca(2+) is bound by residues Asn-117, Gln-168, and Asp-177. The cysteines at positions 156 and 170 are disulfide-linked. Arg-205 is a binding site for chloride. Asp-207 (nucleophile) is an active-site residue. His-211 serves as a coordination point for Ca(2+). The active-site Proton donor is the Glu-244. Chloride contacts are provided by Asn-307 and Arg-342. 3 disulfides stabilise this stretch: Cys-375–Cys-381, Cys-417–Cys-440, and Cys-447–Cys-459.

It belongs to the glycosyl hydrolase 13 family. As to quaternary structure, monomer. Requires Ca(2+) as cofactor. Chloride serves as cofactor.

The protein localises to the secreted. It carries out the reaction Endohydrolysis of (1-&gt;4)-alpha-D-glucosidic linkages in polysaccharides containing three or more (1-&gt;4)-alpha-linked D-glucose units.. The protein is Alpha-amylase-related protein (Amyrel) of Drosophila orena (Fruit fly).